Here is an 81-residue protein sequence, read N- to C-terminus: Large ribosomal subunit protein uL24 (81 aa).

It belongs to the universal ribosomal protein uL24 family. Part of the 50S ribosomal subunit.

Functionally, one of two assembly initiator proteins, it binds directly to the 5'-end of the 23S rRNA, where it nucleates assembly of the 50S subunit. One of the proteins that surrounds the polypeptide exit tunnel on the outside of the subunit. The protein is Large ribosomal subunit protein uL24 of Chloroherpeton thalassium (strain ATCC 35110 / GB-78).